Here is a 316-residue protein sequence, read N- to C-terminus: Acetyl-coenzyme A carboxylase carboxyl transferase subunit alpha (316 aa).

The 255-residue stretch at 36 to 290 (PLRTQLETLR…GSVISRHLDD (255 aa)) folds into the CoA carboxyltransferase C-terminal domain.

It belongs to the AccA family. Acetyl-CoA carboxylase is a heterohexamer composed of biotin carboxyl carrier protein (AccB), biotin carboxylase (AccC) and two subunits each of ACCase subunit alpha (AccA) and ACCase subunit beta (AccD).

The protein localises to the cytoplasm. The catalysed reaction is N(6)-carboxybiotinyl-L-lysyl-[protein] + acetyl-CoA = N(6)-biotinyl-L-lysyl-[protein] + malonyl-CoA. It functions in the pathway lipid metabolism; malonyl-CoA biosynthesis; malonyl-CoA from acetyl-CoA: step 1/1. Its function is as follows. Component of the acetyl coenzyme A carboxylase (ACC) complex. First, biotin carboxylase catalyzes the carboxylation of biotin on its carrier protein (BCCP) and then the CO(2) group is transferred by the carboxyltransferase to acetyl-CoA to form malonyl-CoA. The protein is Acetyl-coenzyme A carboxylase carboxyl transferase subunit alpha of Deinococcus radiodurans (strain ATCC 13939 / DSM 20539 / JCM 16871 / CCUG 27074 / LMG 4051 / NBRC 15346 / NCIMB 9279 / VKM B-1422 / R1).